A 427-amino-acid polypeptide reads, in one-letter code: Enolase (427 aa).

Gln-163 is a (2R)-2-phosphoglycerate binding site. Glu-205 functions as the Proton donor in the catalytic mechanism. Mg(2+) is bound by residues Asp-242, Glu-285, and Asp-312. (2R)-2-phosphoglycerate is bound by residues Lys-337, Arg-366, Ser-367, and Lys-388. Lys-337 (proton acceptor) is an active-site residue.

The protein belongs to the enolase family. Mg(2+) serves as cofactor.

The protein localises to the cytoplasm. It is found in the secreted. It localises to the cell surface. It catalyses the reaction (2R)-2-phosphoglycerate = phosphoenolpyruvate + H2O. It functions in the pathway carbohydrate degradation; glycolysis; pyruvate from D-glyceraldehyde 3-phosphate: step 4/5. Functionally, catalyzes the reversible conversion of 2-phosphoglycerate (2-PG) into phosphoenolpyruvate (PEP). It is essential for the degradation of carbohydrates via glycolysis. The polypeptide is Enolase (Ralstonia nicotianae (strain ATCC BAA-1114 / GMI1000) (Ralstonia solanacearum)).